We begin with the raw amino-acid sequence, 152 residues long: Deoxyuridine 5'-triphosphate nucleotidohydrolase (152 aa).

Substrate-binding positions include 71-73 (RSG), asparagine 84, and 88-90 (TID).

This sequence belongs to the dUTPase family. Mg(2+) serves as cofactor.

The catalysed reaction is dUTP + H2O = dUMP + diphosphate + H(+). It participates in pyrimidine metabolism; dUMP biosynthesis; dUMP from dCTP (dUTP route): step 2/2. This enzyme is involved in nucleotide metabolism: it produces dUMP, the immediate precursor of thymidine nucleotides and it decreases the intracellular concentration of dUTP so that uracil cannot be incorporated into DNA. In Roseobacter denitrificans (strain ATCC 33942 / OCh 114) (Erythrobacter sp. (strain OCh 114)), this protein is Deoxyuridine 5'-triphosphate nucleotidohydrolase.